The chain runs to 186 residues: TATA-box-binding protein (186 aa).

A run of 2 repeats spans residues Ile10–Leu86 and Val101–Leu179.

This sequence belongs to the TBP family.

General factor that plays a role in the activation of archaeal genes transcribed by RNA polymerase. Binds specifically to the TATA box promoter element which lies close to the position of transcription initiation. The protein is TATA-box-binding protein of Haloarcula marismortui (strain ATCC 43049 / DSM 3752 / JCM 8966 / VKM B-1809) (Halobacterium marismortui).